The chain runs to 345 residues: N-acetyl-gamma-glutamyl-phosphate reductase (345 aa).

Residue cysteine 142 is part of the active site.

It belongs to the NAGSA dehydrogenase family. Type 1 subfamily.

The protein resides in the cytoplasm. It carries out the reaction N-acetyl-L-glutamate 5-semialdehyde + phosphate + NADP(+) = N-acetyl-L-glutamyl 5-phosphate + NADPH + H(+). Its pathway is amino-acid biosynthesis; L-arginine biosynthesis; N(2)-acetyl-L-ornithine from L-glutamate: step 3/4. Its function is as follows. Catalyzes the NADPH-dependent reduction of N-acetyl-5-glutamyl phosphate to yield N-acetyl-L-glutamate 5-semialdehyde. The chain is N-acetyl-gamma-glutamyl-phosphate reductase from Thermus thermophilus (strain ATCC BAA-163 / DSM 7039 / HB27).